Here is a 126-residue protein sequence, read N- to C-terminus: Anti-adapter protein IraD (126 aa).

This sequence belongs to the GpW/Gp25 family. IraD subfamily. Interacts with RssB.

It localises to the cytoplasm. In terms of biological role, inhibits RpoS proteolysis by regulating RssB activity, thereby increasing the stability of the sigma stress factor RpoS during oxidative stress. Its effect on RpoS stability is due to its interaction with RssB, which probably blocks the interaction of RssB with RpoS, and the consequent delivery of the RssB-RpoS complex to the ClpXP protein degradation pathway. In Salmonella enteritidis PT4 (strain P125109), this protein is Anti-adapter protein IraD.